Reading from the N-terminus, the 265-residue chain is Methyl-coenzyme M reductase II subunit gamma (265 aa).

R123 serves as a coordination point for coenzyme M.

This sequence belongs to the methyl-coenzyme M reductase gamma subunit family. MCR is a hexamer of two alpha, two beta, and two gamma chains, forming a dimer of heterotrimers. It depends on coenzyme F430 as a cofactor.

It carries out the reaction coenzyme B + methyl-coenzyme M = methane + coenzyme M-coenzyme B heterodisulfide. It participates in one-carbon metabolism; methyl-coenzyme M reduction; methane from methyl-coenzyme M: step 1/1. Functionally, component of the methyl-coenzyme M reductase (MCR) I that catalyzes the reductive cleavage of methyl-coenzyme M (CoM-S-CH3 or 2-(methylthio)ethanesulfonate) using coenzyme B (CoB or 7-mercaptoheptanoylthreonine phosphate) as reductant which results in the production of methane and the mixed heterodisulfide of CoB and CoM (CoM-S-S-CoB). This is the final step in methanogenesis. In Methanothermobacter marburgensis (strain ATCC BAA-927 / DSM 2133 / JCM 14651 / NBRC 100331 / OCM 82 / Marburg) (Methanobacterium thermoautotrophicum), this protein is Methyl-coenzyme M reductase II subunit gamma (mrtG).